A 319-amino-acid chain; its full sequence is MTSIAFWNAFTVNPFPAAARRSPPPLTPFTSGALSPARKPRILEISHPRTLPSFRVQAIAEDEWESEKKALKGVVGSVALAEDETTGADLVVSDLKKKLIDQLFGTDRGLKATSETRAEVNELITQLEAKNPNPAPTEALSLLNGRWILAYTSFAGLFPLLGAESLQQLLKVDEISQTIDSEGFTVQNSVRFVGPFSSTSVTTNAKFEVRSPKRVQIKFEEGIIGTPQLTDSIVIPDKFEFFGQNIDLSPFKGVISSLQDTASSVAKTISSQPPIKFPISNSNAQSWLLTTYLDDELRISRADGGSVFVLIKEGSPLLT.

The transit peptide at 1–55 (MTSIAFWNAFTVNPFPAAARRSPPPLTPFTSGALSPARKPRILEISHPRTLPSFR) directs the protein to the chromoplast.

This sequence belongs to the PAP/fibrillin family. Expressed in flower buds and floral lip tissues. Not detected in roots and leaves. Specifically expressed in conical papillate cells of adaxial epidermis of lip tissues.

The protein localises to the plastid. It localises to the chromoplast. Functionally, may be involved in carotenoid sequestration within chromoplasts. This Oncidium hybrid cultivar (Orchid) protein is Chromoplast-specific carotenoid-associated protein C1, chromoplastic (CHRC1).